The chain runs to 1047 residues: tRNA wybutosine-synthesizing protein 4 (1047 aa).

Residues arginine 69, glycine 95, aspartate 122, 169 to 170 (DL), and glutamate 196 each bind S-adenosyl-L-methionine. The JmjC domain occupies 814-1003 (GRQYLRSISA…AAGRDVYGNR (190 aa)).

Belongs to the methyltransferase superfamily. LCMT family.

The enzyme catalyses 7-[(3S)-3-amino-3-carboxypropyl]wyosine(37) in tRNA(Phe) + S-adenosyl-L-methionine = 7-[(3S)-(3-amino-3-methoxycarbonyl)propyl]wyosine(37) in tRNA(Phe) + S-adenosyl-L-homocysteine. It catalyses the reaction 7-[(3S)-(3-amino-3-methoxycarbonyl)propyl]wyosine(37) in tRNA(Phe) + S-adenosyl-L-methionine + CO2 = wybutosine(37) in tRNA(Phe) + S-adenosyl-L-homocysteine + 2 H(+). The protein operates within tRNA modification; wybutosine-tRNA(Phe) biosynthesis. In terms of biological role, probable S-adenosyl-L-methionine-dependent methyltransferase that acts as a component of the wybutosine biosynthesis pathway. Wybutosine is a hyper modified guanosine with a tricyclic base found at the 3'-position adjacent to the anticodon of eukaryotic phenylalanine tRNA. May methylate the carboxyl group of leucine residues to form alpha-leucine ester residues. This is tRNA wybutosine-synthesizing protein 4 (ppm2) from Aspergillus fumigatus (strain ATCC MYA-4609 / CBS 101355 / FGSC A1100 / Af293) (Neosartorya fumigata).